The sequence spans 330 residues: tRNA U34 carboxymethyltransferase (330 aa).

Carboxy-S-adenosyl-L-methionine contacts are provided by residues lysine 91, tryptophan 105, lysine 110, glycine 130, 152 to 154, 181 to 182, methionine 196, tyrosine 200, and arginine 315; these read DPS and IE.

Belongs to the class I-like SAM-binding methyltransferase superfamily. CmoB family. Homotetramer.

The enzyme catalyses carboxy-S-adenosyl-L-methionine + 5-hydroxyuridine(34) in tRNA = 5-carboxymethoxyuridine(34) in tRNA + S-adenosyl-L-homocysteine + H(+). Functionally, catalyzes carboxymethyl transfer from carboxy-S-adenosyl-L-methionine (Cx-SAM) to 5-hydroxyuridine (ho5U) to form 5-carboxymethoxyuridine (cmo5U) at position 34 in tRNAs. In Shewanella denitrificans (strain OS217 / ATCC BAA-1090 / DSM 15013), this protein is tRNA U34 carboxymethyltransferase.